A 297-amino-acid chain; its full sequence is Putative movement protein (297 aa).

Residues serine 249 to glutamate 297 are disordered. A compositionally biased stretch (basic and acidic residues) spans lysine 253–arginine 264. Polar residues predominate over residues leucine 270 to glutamate 297.

The protein resides in the host cell junction. It is found in the host plasmodesma. Functionally, transports viral genome to neighboring plant cells directly through plasmosdesmata, without any budding. The movement protein allows efficient cell to cell propagation, by bypassing the host cell wall barrier. This chain is Putative movement protein (MP), found in Citrus sinensis (Sweet orange).